The primary structure comprises 525 residues: MEKESENASCAGLLGQKNEPGSPTQSRSGKHKLSVCSKICFAIGGAPYQITGCALGFFLQIFLLDIAQVPPFYASIILFSGRVWDAITDPLVGFFVSKSSWTRLGRLLPWVVFSTPFAVVSYLLIWFVPGFSGVSMVIWYLVFYCLFQTLVTCFHVPYSALTMFISKEQSDRDSATGYRMTVEVLGTVLGTAIQGQIVGRENTPCVEHIRETHLYNTSVIMEDLNITHDVESLSSTRDAYMIAAGVICAIYVLCAIILTLGVREKRDAYELLSDQPFSFWQGLKLVMSHKPYIKLITGFLFTSLAFMLLEGNFALFLTYTMGFRRDFQNILLVVMLSATLTVPFWQWFLTRFGKKTAVYFGISSVIPFLILVVLMESNLILAYVVAVAAGLSVAAAFLLPWSMLPDVIDDFILKNPDSHGHEPIFFSFYVFFTKFASGVSLGISTLSLDFAGYQTRACSQPEQVNLTLKMLICVAPVILILLGLLLFILYPINEEKRKQNKKALQLIRESNRDSDSDSLELASNV.

The interval 1–29 (MEKESENASCAGLLGQKNEPGSPTQSRSG) is disordered. Residues 1 to 32 (MEKESENASCAGLLGQKNEPGSPTQSRSGKHK) are Cytoplasmic-facing. The helical transmembrane segment at 33–62 (LSVCSKICFAIGGAPYQITGCALGFFLQIF) threads the bilayer. Residues 63 to 73 (LLDIAQVPPFY) lie on the Extracellular side of the membrane. A helical transmembrane segment spans residues 74 to 94 (ASIILFSGRVWDAITDPLVGF). Residues 95-106 (FVSKSSWTRLGR) lie on the Cytoplasmic side of the membrane. The chain crosses the membrane as a helical span at residues 107-126 (LLPWVVFSTPFAVVSYLLIW). Over 127-137 (FVPGFSGVSMV) the chain is Extracellular. Residues 138–162 (IWYLVFYCLFQTLVTCFHVPYSALT) form a helical membrane-spanning segment. The Cytoplasmic portion of the chain corresponds to 163–169 (MFISKEQ). Residues 170-201 (SDRDSATGYRMTVEVLGTVLGTAIQGQIVGRE) form a helical membrane-spanning segment. Residues 202-226 (NTPCVEHIRETHLYNTSVIMEDLNI) are Extracellular-facing. C205 and C458 are joined by a disulfide. N216 and N225 each carry an N-linked (GlcNAc...) asparagine glycan. Residues 227–260 (THDVESLSSTRDAYMIAAGVICAIYVLCAIILTL) form a helical membrane-spanning segment. Residues 261–291 (GVREKRDAYELLSDQPFSFWQGLKLVMSHKP) are Cytoplasmic-facing. Residues 292-318 (YIKLITGFLFTSLAFMLLEGNFALFLT) form a helical membrane-spanning segment. Residues 319-329 (YTMGFRRDFQN) are Extracellular-facing. A helical transmembrane segment spans residues 330 to 348 (ILLVVMLSATLTVPFWQWF). At 349–352 (LTRF) the chain is on the cytoplasmic side. The chain crosses the membrane as a helical span at residues 353-374 (GKKTAVYFGISSVIPFLILVVL). Topologically, residues 375-377 (MES) are extracellular. The helical transmembrane segment at 378 to 414 (NLILAYVVAVAAGLSVAAAFLLPWSMLPDVIDDFILK) threads the bilayer. At 415–424 (NPDSHGHEPI) the chain is on the cytoplasmic side. The chain crosses the membrane as a helical span at residues 425–451 (FFSFYVFFTKFASGVSLGISTLSLDFA). Residues 452–463 (GYQTRACSQPEQ) lie on the Extracellular side of the membrane. Residues 464 to 487 (VNLTLKMLICVAPVILILLGLLLF) form a helical membrane-spanning segment. Over 488–525 (ILYPINEEKRKQNKKALQLIRESNRDSDSDSLELASNV) the chain is Cytoplasmic.

It belongs to the major facilitator superfamily.

It is found in the cell membrane. The protein resides in the endoplasmic reticulum membrane. The enzyme catalyses a 1-acyl-sn-glycero-3-phosphocholine(in) + Na(+)(in) = a 1-acyl-sn-glycero-3-phosphocholine(out) + Na(+)(out). It carries out the reaction 1-(4Z,7Z,10Z,13Z,16Z,19Z-docosahexaenoyl)-sn-glycero-3-phosphocholine(in) + Na(+)(in) = 1-(4Z,7Z,10Z,13Z,16Z,19Z-docosahexaenoyl)-sn-glycero-3-phosphocholine(out) + Na(+)(out). It catalyses the reaction 1-(9Z-octadecenoyl)-sn-glycero-3-phosphocholine(in) + Na(+)(in) = 1-(9Z-octadecenoyl)-sn-glycero-3-phosphocholine(out) + Na(+)(out). The catalysed reaction is 1-hexadecanoyl-sn-glycero-3-phosphocholine(in) + Na(+)(in) = 1-hexadecanoyl-sn-glycero-3-phosphocholine(out) + Na(+)(out). The enzyme catalyses a 1-acyl-sn-glycero-3-phosphoethanolamine(in) + Na(+)(in) = a 1-acyl-sn-glycero-3-phosphoethanolamine(out) + Na(+)(out). Functionally, sodium-dependent lysophosphatidylcholine (LPC) symporter, which plays an essential role for blood-brain barrier formation and function. Specifically expressed in endothelium of the blood-brain barrier of micro-vessels and transports LPC into the brain. Transport of LPC is essential because it constitutes the major mechanism by which docosahexaenoic acid (DHA), an omega-3 fatty acid that is essential for normal brain growth and cognitive function, enters the brain. Transports LPC carrying long-chain fatty acids such LPC oleate and LPC palmitate with a minimum acyl chain length of 14 carbons. Does not transport docosahexaenoic acid in unesterified fatty acid. This is Sodium-dependent lysophosphatidylcholine symporter 1 (mfsd2a) from Xenopus tropicalis (Western clawed frog).